Reading from the N-terminus, the 1039-residue chain is uncharacterized protein (1039 aa).

This is an uncharacterized protein from Treponema pallidum (strain Nichols).